The sequence spans 556 residues: MSVSAFNRRWAAVILEALTRHGVRHVCIAPGSRSTPLTLAAAENPAFIHHTHFDERGLGHLALGLAKVSQQPVAVIVTSGTAVANLYPALIEAGLTGEKLILLTADRPPELIDCGANQAIRQAGMFASHPSQTLSLPRPTQDIPARWLVSTIDNALAMLHAGALHINCPFAEPLYGDMNDTGLVWQQRLGDWWQDEKPWLREARRLESDKQRDWFFWRQKRGVVVAGRMSAEEGKKVAQWAQTLGWPLIGDVLSQTGQPLPCADLWLGNAKAVTELQQAQIVVQLGSSLTGKRLLQWQATCEPEEYWVIDNIEGRLDPAHHRGRRLVAKIADWLELHPAEKRKPWCVEIPRLVELAWQRVVAQRDTFGEAQLAHRIRDYLPEQGQLFVGNSLVVRLIDALSQLPAGYPVYSNRGASGIDGLLSTAAGVQRASAKSTLAIVGDLSALYDLNALALLRQVSAPFVLIVVNNNGGQIFSLLPTPQSKRERFYLMPQNVHFDHAAAMFNLRYHRPENWEELESALAGAWRTPAATVIELVVNDTDGAQTLQQLLAQVSHL.

Belongs to the TPP enzyme family. MenD subfamily. In terms of assembly, homodimer. Mg(2+) is required as a cofactor. It depends on Mn(2+) as a cofactor. The cofactor is thiamine diphosphate.

It catalyses the reaction isochorismate + 2-oxoglutarate + H(+) = 5-enolpyruvoyl-6-hydroxy-2-succinyl-cyclohex-3-ene-1-carboxylate + CO2. The protein operates within quinol/quinone metabolism; 1,4-dihydroxy-2-naphthoate biosynthesis; 1,4-dihydroxy-2-naphthoate from chorismate: step 2/7. It participates in quinol/quinone metabolism; menaquinone biosynthesis. Catalyzes the thiamine diphosphate-dependent decarboxylation of 2-oxoglutarate and the subsequent addition of the resulting succinic semialdehyde-thiamine pyrophosphate anion to isochorismate to yield 2-succinyl-5-enolpyruvyl-6-hydroxy-3-cyclohexene-1-carboxylate (SEPHCHC). The polypeptide is 2-succinyl-5-enolpyruvyl-6-hydroxy-3-cyclohexene-1-carboxylate synthase (Salmonella paratyphi C (strain RKS4594)).